A 104-amino-acid polypeptide reads, in one-letter code: DET1- and DDB1-associated protein 1 (104 aa).

A compositionally biased stretch (basic and acidic residues) spans 67–77 (KKNAAKKREQE). A disordered region spans residues 67 to 104 (KKNAAKKREQEQAEGEGGSPAPPRKIARTDSQEMNEDS).

It belongs to the DDA1 family. In terms of assembly, component of numerous DCX (DDB1-CUL4-X-box) E3 ubiquitin-protein ligase complexes which consist of a core of DDB1, cullin-4 (CUL4A or CUL4B), DDA1 and RBX1.

It functions in the pathway protein modification; protein ubiquitination. Functionally, functions as a component of numerous distinct DCX (DDB1-CUL4-X-box) E3 ubiquitin-protein ligase complexes which mediate the ubiquitination and subsequent proteasomal degradation of target proteins. In the DCX complexes, acts as a scaffolding subunit required to stabilize the complex. This is DET1- and DDB1-associated protein 1 from Danio rerio (Zebrafish).